Consider the following 138-residue polypeptide: Transcription antitermination protein NusB (138 aa).

This sequence belongs to the NusB family.

In terms of biological role, involved in transcription antitermination. Required for transcription of ribosomal RNA (rRNA) genes. Binds specifically to the boxA antiterminator sequence of the ribosomal RNA (rrn) operons. This chain is Transcription antitermination protein NusB, found in Desulforudis audaxviator (strain MP104C).